The following is a 309-amino-acid chain: Maintenance of mitochondrial morphology protein 1 (309 aa).

Residues 1–16 are Lumenal-facing; the sequence is MGNAYIFSLQPTFTQG. Residues 17-37 form a helical membrane-spanning segment; the sequence is LILGQFSILFLLVLVLKYLFF. Residues 38–309 are Cytoplasmic-facing; the sequence is DTVSDHAYRT…EQQAGELPVN (272 aa). The SMP-LTD domain maps to 84-293; that stretch reads ECESADWLNA…LPGLASVSEV (210 aa).

This sequence belongs to the MMM1 family. In terms of assembly, homodimer. Component of the ER-mitochondria encounter structure (ERMES) or MDM complex, composed of MMM1, MDM10, MDM12 and MDM34. An MMM1 homodimer associates with one molecule of MDM12 on each side in a pairwise head-to-tail manner, and the SMP-LTD domains of MMM1 and MDM12 generate a continuous hydrophobic tunnel for phospholipid trafficking.

The protein localises to the endoplasmic reticulum membrane. Its function is as follows. Component of the ERMES/MDM complex, which serves as a molecular tether to connect the endoplasmic reticulum (ER) and mitochondria. Components of this complex are involved in the control of mitochondrial shape and protein biogenesis, and function in nonvesicular lipid trafficking between the ER and mitochondria. The MDM12-MMM1 subcomplex functions in the major beta-barrel assembly pathway that is responsible for biogenesis of all outer membrane beta-barrel proteins, and acts in a late step after the SAM complex. The MDM10-MDM12-MMM1 subcomplex further acts in the TOM40-specific pathway after the action of the MDM12-MMM1 complex. Essential for establishing and maintaining the structure of mitochondria and maintenance of mtDNA nucleoids. This Postia placenta (strain ATCC 44394 / Madison 698-R) (Brown rot fungus) protein is Maintenance of mitochondrial morphology protein 1.